The following is a 446-amino-acid chain: D-inositol 3-phosphate glycosyltransferase (446 aa).

H19 lines the 1D-myo-inositol 3-phosphate pocket. UDP-N-acetyl-alpha-D-glucosamine is bound by residues 25 to 26 and G33; that span reads QP. Residues 30–35, K88, Y121, T145, and R165 contribute to the 1D-myo-inositol 3-phosphate site; that span reads DAGGMN. Positions 239, 244, and 303 each coordinate UDP-N-acetyl-alpha-D-glucosamine. Y312, R313, and S315 together coordinate Mg(2+). UDP-N-acetyl-alpha-D-glucosamine contacts are provided by E325 and E333. A Mg(2+)-binding site is contributed by T339.

The protein belongs to the glycosyltransferase group 1 family. MshA subfamily. As to quaternary structure, homodimer.

It catalyses the reaction 1D-myo-inositol 3-phosphate + UDP-N-acetyl-alpha-D-glucosamine = 1D-myo-inositol 2-acetamido-2-deoxy-alpha-D-glucopyranoside 3-phosphate + UDP + H(+). Its function is as follows. Catalyzes the transfer of a N-acetyl-glucosamine moiety to 1D-myo-inositol 3-phosphate to produce 1D-myo-inositol 2-acetamido-2-deoxy-glucopyranoside 3-phosphate in the mycothiol biosynthesis pathway. The protein is D-inositol 3-phosphate glycosyltransferase of Rhodococcus opacus (strain B4).